We begin with the raw amino-acid sequence, 174 residues long: Ribosome maturation factor RimM (174 aa).

The PRC barrel domain maps to 97-169; that stretch reads PDTYYDHQLE…ILEIDPPDGL (73 aa).

Belongs to the RimM family. In terms of assembly, binds ribosomal protein uS19.

It is found in the cytoplasm. Its function is as follows. An accessory protein needed during the final step in the assembly of 30S ribosomal subunit, possibly for assembly of the head region. Essential for efficient processing of 16S rRNA. May be needed both before and after RbfA during the maturation of 16S rRNA. It has affinity for free ribosomal 30S subunits but not for 70S ribosomes. The sequence is that of Ribosome maturation factor RimM from Mycobacterium ulcerans (strain Agy99).